Consider the following 49-residue polypeptide: Zinc-containing ferredoxin (49 aa).

Residues 1–36 (GIDPNYRTSRQVVGEHQGHKVYGPVDPPKVLGIHGT) form an N-terminal extension region. Residues H16 and H19 each contribute to the Zn(2+) site. At K29 the chain carries N6-methyllysine. H34 contributes to the Zn(2+) binding site. The interval 37 to 49 (IVXVDFDLCIADG) is ferredoxin. C45 is a [3Fe-4S] cluster binding site.

Requires [3Fe-4S] cluster as cofactor. [4Fe-4S] cluster serves as cofactor. It depends on Zn(2+) as a cofactor.

Its function is as follows. Ferredoxins are iron-sulfur proteins that transfer electrons in a wide variety of metabolic reactions. This is Zinc-containing ferredoxin (zfx) from Acidianus infernus.